Consider the following 432-residue polypeptide: Chorismate synthase aro-2 (432 aa).

Catalysis depends on residues H17, H106, and D367. Residues 406–432 (LKQTINSGKDTVGNGVSENVQESDLAQ) form a disordered region. Positions 408-432 (QTINSGKDTVGNGVSENVQESDLAQ) are enriched in polar residues.

Belongs to the chorismate synthase family. Homotetramer.

It catalyses the reaction 5-O-(1-carboxyvinyl)-3-phosphoshikimate = chorismate + phosphate. It carries out the reaction FMNH2 + NADP(+) = FMN + NADPH + 2 H(+). The protein operates within metabolic intermediate biosynthesis; chorismate biosynthesis; chorismate from D-erythrose 4-phosphate and phosphoenolpyruvate: step 7/7. Its function is as follows. Bifunctional chorismate synthase and flavin reductase that catalyzes the conversion of 5-enolpyruvylshikimate 3-phosphate (EPSP) to form chorismate, which is the last common intermediate in the synthesis of the three aromatic amino acids phenylalanine, tyrosine and tryptophan. Acts also as a flavin reductase (FR) able to generate reduced flavin mononucleotide in the presence of NADPH. In Neurospora crassa (strain ATCC 24698 / 74-OR23-1A / CBS 708.71 / DSM 1257 / FGSC 987), this protein is Chorismate synthase aro-2.